Reading from the N-terminus, the 652-residue chain is uncharacterized protein (652 aa).

2 stretches are compositionally biased toward basic and acidic residues: residues 1-13 (MSVT…TERK) and 641-652 (ATERTDNLADAA). 2 disordered regions span residues 1–21 (MSVT…PAKT) and 628–652 (VPGW…ADAA).

This sequence belongs to the ParB family.

This is an uncharacterized protein from Escherichia coli O157:H7.